The chain runs to 258 residues: MLDKVKNVIIVLSGKGGVGKSTVSTQLALALRHSGHKVGLLDIDLCGPSVPFLLGLEGSNIYQCDEGWVPIYTDASKTLAVMSIGFLLKNRTDPVIWRGPKKTMMIRQFLTDVKWEELDYLIIDTPPGTSDEHITVMECMREVPCNGAIIVTTPQSVALDDVRKEITFCKKTGIKLLGIVENMSGFVCPNCTNCTNIFSSNGGVELAHLVQIPHLGTLPIDPRVGVLAGSTASVLDELPDSPTAQVLRGIVQHLVALT.

14–21 (GKGGVGKS) lines the ATP pocket. 2 residues coordinate [4Fe-4S] cluster: C188 and C191.

Belongs to the Mrp/NBP35 ATP-binding proteins family. NUBP2/CFD1 subfamily. Heterotetramer of 2 Nubp1 and 2 Nubp2 chains. It depends on [4Fe-4S] cluster as a cofactor.

It is found in the cytoplasm. In terms of biological role, component of the cytosolic iron-sulfur (Fe/S) protein assembly (CIA) machinery. Required for maturation of extramitochondrial Fe-S proteins. The Nubp1-Nubp2 heterotetramer forms a Fe-S scaffold complex, mediating the de novo assembly of an Fe-S cluster and its transfer to target apoproteins. The polypeptide is Cytosolic Fe-S cluster assembly factor Nubp2 homolog (Drosophila pseudoobscura pseudoobscura (Fruit fly)).